Here is a 162-residue protein sequence, read N- to C-terminus: Calcium vector protein (162 aa).

Residue A2 is modified to N-acetylalanine. 4 EF-hand domains span residues 12-47 (EEKD…LGQT), 49-84 (TKRE…KWVR), 86-121 (DDEE…VGEE), and 123-158 (LTDA…SKNA). K96 carries the post-translational modification N6,N6,N6-trimethyllysine. Ca(2+)-binding residues include D99, N101, D103, and E110. The residue at position 117 (K117) is an N6,N6,N6-trimethyllysine. The Ca(2+) site is built by D136, D138, N140, and E147.

It localises to the cytoplasm. Functionally, the exact function of this protein is not yet known. It interacts with CAVPT, a protein also of unknown function, in a calcium-dependent way. This protein binds two calcium ions. The protein is Calcium vector protein of Branchiostoma lanceolatum (Common lancelet).